The following is a 106-amino-acid chain: Guanylate cyclase activator 2B (106 aa).

The N-terminal stretch at 1-21 (MSRSQLWAAVVLLLLLQSAQG) is a signal peptide. A propeptide spanning residues 22-91 (VYIKYHGFQV…STFKALRTIA (70 aa)) is cleaved from the precursor. Cystine bridges form between Cys-62/Cys-75, Cys-95/Cys-103, and Cys-98/Cys-106.

Belongs to the guanylin family. In terms of tissue distribution, localized predominantly in intestinal villi and the corticomedullary junction of the kidney.

It is found in the secreted. In terms of biological role, endogenous activator of intestinal guanylate cyclase. It stimulates this enzyme through the same receptor binding region as the heat-stable enterotoxins. May be a potent physiological regulator of intestinal fluid and electrolyte transport. May be an autocrine/paracrine regulator of intestinal salt and water transport. The protein is Guanylate cyclase activator 2B (Guca2b) of Mus musculus (Mouse).